The following is a 542-amino-acid chain: Chaperonin GroEL (542 aa).

ATP is bound by residues 29–32 (TLGP), 86–90 (DGTTT), Gly-413, 476–478 (NAA), and Asp-492.

This sequence belongs to the chaperonin (HSP60) family. Forms a cylinder of 14 subunits composed of two heptameric rings stacked back-to-back. Interacts with the co-chaperonin GroES.

It localises to the cytoplasm. The catalysed reaction is ATP + H2O + a folded polypeptide = ADP + phosphate + an unfolded polypeptide.. Its function is as follows. Together with its co-chaperonin GroES, plays an essential role in assisting protein folding. The GroEL-GroES system forms a nano-cage that allows encapsulation of the non-native substrate proteins and provides a physical environment optimized to promote and accelerate protein folding. The protein is Chaperonin GroEL of Streptococcus mutans serotype c (strain ATCC 700610 / UA159).